The following is a 229-amino-acid chain: Potassium/proton antiporter CemA (229 aa).

The next 3 helical transmembrane spans lie at 6-26 (AFIP…ISLC), 107-127 (ILHF…SFWG), and 189-209 (ILSG…KYWI).

The protein belongs to the CemA family.

It localises to the plastid. It is found in the chloroplast inner membrane. The catalysed reaction is K(+)(in) + H(+)(out) = K(+)(out) + H(+)(in). Functionally, contributes to K(+)/H(+) antiport activity by supporting proton efflux to control proton extrusion and homeostasis in chloroplasts in a light-dependent manner to modulate photosynthesis. Prevents excessive induction of non-photochemical quenching (NPQ) under continuous-light conditions. Indirectly promotes efficient inorganic carbon uptake into chloroplasts. This is Potassium/proton antiporter CemA from Draba nemorosa (Woodland whitlowgrass).